We begin with the raw amino-acid sequence, 103 residues long: Sperm-associated antigen 11B (103 aa).

An N-terminal signal peptide occupies residues 1-25 (MRQRLLPSVTSLLLVALLFPGSSQA). Residue Asn-29 is glycosylated (N-linked (GlcNAc...) asparagine).

It belongs to the SPAG11 family. In terms of tissue distribution, specifically expressed in caput and proximal corpus of epididymis (at protein level). Present in the epididymal epithelium and on the sperm surface, with a subacrosomal equatorial distribution on the sperm head (at protein level).

The protein resides in the secreted. Has antimicrobial activity against E.coli. Plays a role in the defense response in the male reproductive tract, contributing to sperm maturation, storage and protection. This Homo sapiens (Human) protein is Sperm-associated antigen 11B.